A 114-amino-acid polypeptide reads, in one-letter code: Iron-sulfur cluster insertion protein ErpA (114 aa).

Iron-sulfur cluster contacts are provided by Cys42, Cys106, and Cys108.

Belongs to the HesB/IscA family. Homodimer. The cofactor is iron-sulfur cluster.

Its function is as follows. Required for insertion of 4Fe-4S clusters for at least IspG. This Pasteurella multocida (strain Pm70) protein is Iron-sulfur cluster insertion protein ErpA.